The sequence spans 227 residues: MKFAVIVFPGSNCDADMYHAIKDGLGEEVEYVFHTETSLDGFDAVLLPGGFSHGDYLRSGAIARFAPIMPAVIQAAEAGKPVLGVCNGFQVLLEAGLLPGAMKRNIDLKFVCRTVELVVENNETMFSSGYEQGQTIRIPVAHGEGNYECDDETLAKLRENKQIVFRYNEHVNGSKGDIAGITNERGNVLGMMPHPERATETLLGNDQGLAVFTSILRNWRESHVTAS.

The Glutamine amidotransferase type-1 domain maps to 3 to 227 (FAVIVFPGSN…NWRESHVTAS (225 aa)). Catalysis depends on C86, which acts as the Nucleophile. Catalysis depends on residues H194 and E196.

Part of the FGAM synthase complex composed of 1 PurL, 1 PurQ and 2 PurS subunits.

Its subcellular location is the cytoplasm. The catalysed reaction is N(2)-formyl-N(1)-(5-phospho-beta-D-ribosyl)glycinamide + L-glutamine + ATP + H2O = 2-formamido-N(1)-(5-O-phospho-beta-D-ribosyl)acetamidine + L-glutamate + ADP + phosphate + H(+). The enzyme catalyses L-glutamine + H2O = L-glutamate + NH4(+). Its pathway is purine metabolism; IMP biosynthesis via de novo pathway; 5-amino-1-(5-phospho-D-ribosyl)imidazole from N(2)-formyl-N(1)-(5-phospho-D-ribosyl)glycinamide: step 1/2. Part of the phosphoribosylformylglycinamidine synthase complex involved in the purines biosynthetic pathway. Catalyzes the ATP-dependent conversion of formylglycinamide ribonucleotide (FGAR) and glutamine to yield formylglycinamidine ribonucleotide (FGAM) and glutamate. The FGAM synthase complex is composed of three subunits. PurQ produces an ammonia molecule by converting glutamine to glutamate. PurL transfers the ammonia molecule to FGAR to form FGAM in an ATP-dependent manner. PurS interacts with PurQ and PurL and is thought to assist in the transfer of the ammonia molecule from PurQ to PurL. The polypeptide is Phosphoribosylformylglycinamidine synthase subunit PurQ (Shouchella clausii (strain KSM-K16) (Alkalihalobacillus clausii)).